A 568-amino-acid polypeptide reads, in one-letter code: 2-succinyl-5-enolpyruvyl-6-hydroxy-3-cyclohexene-1-carboxylate synthase (568 aa).

It belongs to the TPP enzyme family. MenD subfamily. Homodimer. Mg(2+) serves as cofactor. Requires Mn(2+) as cofactor. The cofactor is thiamine diphosphate.

The catalysed reaction is isochorismate + 2-oxoglutarate + H(+) = 5-enolpyruvoyl-6-hydroxy-2-succinyl-cyclohex-3-ene-1-carboxylate + CO2. The protein operates within quinol/quinone metabolism; 1,4-dihydroxy-2-naphthoate biosynthesis; 1,4-dihydroxy-2-naphthoate from chorismate: step 2/7. Its pathway is quinol/quinone metabolism; menaquinone biosynthesis. Functionally, catalyzes the thiamine diphosphate-dependent decarboxylation of 2-oxoglutarate and the subsequent addition of the resulting succinic semialdehyde-thiamine pyrophosphate anion to isochorismate to yield 2-succinyl-5-enolpyruvyl-6-hydroxy-3-cyclohexene-1-carboxylate (SEPHCHC). The polypeptide is 2-succinyl-5-enolpyruvyl-6-hydroxy-3-cyclohexene-1-carboxylate synthase (Mannheimia succiniciproducens (strain KCTC 0769BP / MBEL55E)).